A 296-amino-acid polypeptide reads, in one-letter code: 4-hydroxybenzoate octaprenyltransferase (296 aa).

The next 8 membrane-spanning stretches (helical) occupy residues 28–48 (PIGIYLLLWPTLWALWIAGKG), 52–72 (LANIVIFVLGVVLTRAGGCVI), 102–122 (ALVFFALLMGVSFLLVLCTNA), 146–166 (YYPQVVLGAAFSWGMPMAFTA), 169–189 (GELPATAWLLWIANLLWTVGY), 219–239 (VIILTLQVLSLGCLVLAGSKF), 241–261 (LGMWFHLGLLVAAGCYAWEFW), and 275–295 (FLHNHWAGLAIFVGIVLDYAL).

It belongs to the UbiA prenyltransferase family. Requires Mg(2+) as cofactor.

Its subcellular location is the cell inner membrane. It catalyses the reaction all-trans-octaprenyl diphosphate + 4-hydroxybenzoate = 4-hydroxy-3-(all-trans-octaprenyl)benzoate + diphosphate. It functions in the pathway cofactor biosynthesis; ubiquinone biosynthesis. Its function is as follows. Catalyzes the prenylation of para-hydroxybenzoate (PHB) with an all-trans polyprenyl group. Mediates the second step in the final reaction sequence of ubiquinone-8 (UQ-8) biosynthesis, which is the condensation of the polyisoprenoid side chain with PHB, generating the first membrane-bound Q intermediate 3-octaprenyl-4-hydroxybenzoate. In Pseudomonas fluorescens (strain Pf0-1), this protein is 4-hydroxybenzoate octaprenyltransferase.